We begin with the raw amino-acid sequence, 603 residues long: Matrix metalloproteinase-17 (603 aa).

The signal sequence occupies residues 1 to 35; that stretch reads MRRRAARGPGPPPPGPGLSRLPLPLLLLLALGTRG. Positions 36-125 are excised as a propeptide; it reads GCAAPAPAPR…PVLTQARRRR (90 aa). Positions 108-115 match the Cysteine switch motif; sequence PRCSLPDL. Zn(2+) is bound at residue cysteine 110. Asparagine 137 carries N-linked (GlcNAc...) asparagine glycosylation. Histidine 248 serves as a coordination point for Zn(2+). The active site involves glutamate 249. Residues histidine 252 and histidine 258 each contribute to the Zn(2+) site. Residues 301 to 329 are disordered; that stretch reads SPTAQPEEPPLLPEPPDNRSSAPPRKDVP. Asparagine 318 carries N-linked (GlcNAc...) asparagine glycosylation. Cysteine 332 and cysteine 523 are disulfide-bonded. Hemopexin repeat units follow at residues 333–378, 382–427, 428–475, and 476–523; these read STHF…WRGL, LDSV…FSLP, PGGI…WRGV, and PSTL…WLVC. Residues 537–571 form a disordered region; the sequence is DAAEGPRAPPGQHDQSRSEDGYEVCSCTSGASSPP. Residue serine 565 is the site of GPI-anchor amidated serine attachment. A propeptide spans 566 to 603 (removed in mature form); that stretch reads GASSPPGAPGPLVAATMLLLLPPLSPGALWTAAQALTL.

The protein belongs to the peptidase M10A family. It depends on Zn(2+) as a cofactor. Requires Ca(2+) as cofactor. The precursor is cleaved by a furin endopeptidase. In terms of tissue distribution, expressed in brain, leukocytes, colon, ovary testis and breast cancer. Expressed also in many transformed and non-transformed cell types.

It is found in the cell membrane. It localises to the secreted. The protein resides in the extracellular space. The protein localises to the extracellular matrix. Endopeptidase that degrades various components of the extracellular matrix, such as fibrin. May be involved in the activation of membrane-bound precursors of growth factors or inflammatory mediators, such as tumor necrosis factor-alpha. May also be involved in tumoral process. Cleaves pro-TNF-alpha at the '74-Ala-|-Gln-75' site. Not obvious if able to proteolytically activate progelatinase A. Does not hydrolyze collagen types I, II, III, IV and V, gelatin, fibronectin, laminin, decorin nor alpha1-antitrypsin. In Homo sapiens (Human), this protein is Matrix metalloproteinase-17 (MMP17).